A 164-amino-acid polypeptide reads, in one-letter code: 2S albumin seed storage protein PINP1 (164 aa).

The signal sequence occupies residues 1–29; sequence MGVFSSPMSTLRWVTLFAALLSLLEWGTA. Residues 92-107 are compositionally biased toward low complexity; the sequence is DQSQSYDSSTDSDSQD. The tract at residues 92–137 is disordered; sequence DQSQSYDSSTDSDSQDGAPLNQRRRRRGEGRGREEEEAVERAEELP. Basic and acidic residues predominate over residues 120-137; sequence EGRGREEEEAVERAEELP. Asn138 carries N-linked (GalNAc...) asparagine glycosylation.

Belongs to the 2S seed storage albumins family.

This chain is 2S albumin seed storage protein PINP1, found in Pinus pinea (Italian stone pine).